The sequence spans 504 residues: Glucose-6-phosphate isomerase (504 aa).

E333 functions as the Proton donor in the catalytic mechanism. Catalysis depends on residues H364 and K473.

This sequence belongs to the GPI family.

It is found in the cytoplasm. It carries out the reaction alpha-D-glucose 6-phosphate = beta-D-fructose 6-phosphate. Its pathway is carbohydrate biosynthesis; gluconeogenesis. It participates in carbohydrate degradation; glycolysis; D-glyceraldehyde 3-phosphate and glycerone phosphate from D-glucose: step 2/4. Functionally, catalyzes the reversible isomerization of glucose-6-phosphate to fructose-6-phosphate. The polypeptide is Glucose-6-phosphate isomerase (Xanthomonas oryzae pv. oryzae (strain KACC10331 / KXO85)).